We begin with the raw amino-acid sequence, 79 residues long: MSNKGQLLQDPFLNALRKEHVPVSIYLVNGIKLQGNIESFDQYVVLLRNTVTQMVYKHAISTVVPARAVNFRVDEASDA.

The Sm domain occupies Asp-10 to Val-69.

Belongs to the Hfq family. As to quaternary structure, homohexamer.

Its function is as follows. RNA chaperone that binds small regulatory RNA (sRNAs) and mRNAs to facilitate mRNA translational regulation in response to envelope stress, environmental stress and changes in metabolite concentrations. Also binds with high specificity to tRNAs. The sequence is that of RNA-binding protein Hfq from Ralstonia nicotianae (strain ATCC BAA-1114 / GMI1000) (Ralstonia solanacearum).